The sequence spans 340 residues: Guanine nucleotide-binding protein G(I)/G(S)/G(T) subunit beta-3 (340 aa).

7 WD repeats span residues 53–83 (GHLAKIYAMHWATDSKLLVSASQDGKLIVWD), 95–125 (LRSSWVMTCAYAPSGNFVACGGLDNMCSIYS), 141–170 (AHTGYLSCCRFLDDNNIVTSSGDTTCALWD), 182–212 (GHTGDCMSLAVSPDYKLFISGACDASAKLWD), 224–254 (GHESDINAICFFPNGEAICTGSDDASCRLFD), 268–298 (SIICGITSVAFSLSGRLLFAGYDDFNCNVWD), and 310–340 (GHDNRVSCLGVTADGMAVATGSWDSFLKIWN).

This sequence belongs to the WD repeat G protein beta family. G proteins are composed of 3 units, alpha, beta and gamma. Interacts with RASD2. As to expression, expressed at a high level in the heart and at a much lower level in the brain.

In terms of biological role, guanine nucleotide-binding proteins (G proteins) are involved as a modulator or transducer in various transmembrane signaling systems. The beta and gamma chains are required for the GTPase activity, for replacement of GDP by GTP, and for G protein-effector interaction. This Rattus norvegicus (Rat) protein is Guanine nucleotide-binding protein G(I)/G(S)/G(T) subunit beta-3 (Gnb3).